The sequence spans 615 residues: DNA mismatch repair protein MutL (615 aa).

The interval 363–397 (FAEPAAREPVAPRYTPAPASGSRPAAPWPNAQPGY) is disordered. Low complexity predominate over residues 364-391 (AEPAAREPVAPRYTPAPASGSRPAAPWP).

It belongs to the DNA mismatch repair MutL/HexB family.

This protein is involved in the repair of mismatches in DNA. It is required for dam-dependent methyl-directed DNA mismatch repair. May act as a 'molecular matchmaker', a protein that promotes the formation of a stable complex between two or more DNA-binding proteins in an ATP-dependent manner without itself being part of a final effector complex. This is DNA mismatch repair protein MutL from Shigella boydii serotype 4 (strain Sb227).